We begin with the raw amino-acid sequence, 333 residues long: MGVAIRDILADCKETLTWDDLSGIAALDAHNALYQFLSIIRQPDGTPLMNGAGRITSHLSGILFRTVNFLEKGIRPVFVFDGKPPEFKQETINERREHRARADEAWKTALREGDMEEAYKQASASARIDSHTIASSRELLDLLGIPWVQAPSEGEAQAAYMARQGKVTYAVSQDYDSLLFGSPVLVRNLTVSGRRKTRGRTITVNPERIVLSSFLDRLGVTREQLVKIGILVGTDFNPGIRGVGGKTALKIVRNGEFESVIAEKQPDFNPAPIRDFFLNPPVTDDYTLEWRTPDVEGVVEMLCGRYDFSEERVRSALAKVSVKATQKTLDAWF.

The tract at residues 1-99 (MGVAIRDILA…ETINERREHR (99 aa)) is N-domain. Mg(2+) contacts are provided by Asp-28, Asp-81, Glu-153, Glu-155, Asp-174, Asp-176, and Asp-235. The interval 117–255 (EAYKQASASA…KTALKIVRNG (139 aa)) is I-domain. An interaction with PCNA region spans residues 325-333 (TQKTLDAWF).

It belongs to the XPG/RAD2 endonuclease family. FEN1 subfamily. Interacts with PCNA. PCNA stimulates the nuclease activity without altering cleavage specificity. The cofactor is Mg(2+).

Structure-specific nuclease with 5'-flap endonuclease and 5'-3' exonuclease activities involved in DNA replication and repair. During DNA replication, cleaves the 5'-overhanging flap structure that is generated by displacement synthesis when DNA polymerase encounters the 5'-end of a downstream Okazaki fragment. Binds the unpaired 3'-DNA end and kinks the DNA to facilitate 5' cleavage specificity. Cleaves one nucleotide into the double-stranded DNA from the junction in flap DNA, leaving a nick for ligation. Also involved in the base excision repair (BER) pathway. Acts as a genome stabilization factor that prevents flaps from equilibrating into structures that lead to duplications and deletions. Also possesses 5'-3' exonuclease activity on nicked or gapped double-stranded DNA. This is Flap endonuclease 1 from Methanoculleus marisnigri (strain ATCC 35101 / DSM 1498 / JR1).